A 26-amino-acid polypeptide reads, in one-letter code: SCQKWMWLCDEERKCCEDMVCKLWCK.

3 cysteine pairs are disulfide-bonded: C2/C16, C9/C21, and C15/C25.

It belongs to the neurotoxin 30 (phrixotoxin) family. In terms of tissue distribution, expressed by the venom gland.

The protein resides in the secreted. Functionally, gating-modifier toxin that non-selectively inhibits voltage-gated sodium channel Nav by shifting the threshold for channel activation to more positive potentials. This toxin moderately inhibits human Nav1.2/SCN2A (IC(50)=404 nM), Nav1.5/SCN5A (IC(50)=218 nM) and Nav1.7/SCN9A (IC(50)=333 nM). Inhibition of Nav1.7 is voltage-dependent, with lower inhibition at more positive test pulses. This chain is Mu-theraphotoxin-Phlo2a, found in Phlogius sp. (Tarantula spider).